Reading from the N-terminus, the 331-residue chain is Lipoyl synthase (331 aa).

The tract at residues M1–A33 is disordered. Low complexity predominate over residues A7–Q19. Residues D21–A33 are compositionally biased toward basic and acidic residues. The [4Fe-4S] cluster site is built by C78, C83, C89, C104, C108, C111, and S318. Residues C89–T307 form the Radical SAM core domain.

This sequence belongs to the radical SAM superfamily. Lipoyl synthase family. Requires [4Fe-4S] cluster as cofactor.

Its subcellular location is the cytoplasm. It carries out the reaction [[Fe-S] cluster scaffold protein carrying a second [4Fe-4S](2+) cluster] + N(6)-octanoyl-L-lysyl-[protein] + 2 oxidized [2Fe-2S]-[ferredoxin] + 2 S-adenosyl-L-methionine + 4 H(+) = [[Fe-S] cluster scaffold protein] + N(6)-[(R)-dihydrolipoyl]-L-lysyl-[protein] + 4 Fe(3+) + 2 hydrogen sulfide + 2 5'-deoxyadenosine + 2 L-methionine + 2 reduced [2Fe-2S]-[ferredoxin]. It functions in the pathway protein modification; protein lipoylation via endogenous pathway; protein N(6)-(lipoyl)lysine from octanoyl-[acyl-carrier-protein]: step 2/2. Functionally, catalyzes the radical-mediated insertion of two sulfur atoms into the C-6 and C-8 positions of the octanoyl moiety bound to the lipoyl domains of lipoate-dependent enzymes, thereby converting the octanoylated domains into lipoylated derivatives. The protein is Lipoyl synthase of Cupriavidus pinatubonensis (strain JMP 134 / LMG 1197) (Cupriavidus necator (strain JMP 134)).